Consider the following 284-residue polypeptide: Phosphatidylglycerol--prolipoprotein diacylglyceryl transferase (284 aa).

A run of 7 helical transmembrane segments spans residues L18–F38, Y62–Y82, F106–Y126, L136–I156, P190–A210, G218–Y238, and L252–Y272. Residue R155 coordinates a 1,2-diacyl-sn-glycero-3-phospho-(1'-sn-glycerol).

It belongs to the Lgt family.

Its subcellular location is the cell inner membrane. It catalyses the reaction L-cysteinyl-[prolipoprotein] + a 1,2-diacyl-sn-glycero-3-phospho-(1'-sn-glycerol) = an S-1,2-diacyl-sn-glyceryl-L-cysteinyl-[prolipoprotein] + sn-glycerol 1-phosphate + H(+). Its pathway is protein modification; lipoprotein biosynthesis (diacylglyceryl transfer). Functionally, catalyzes the transfer of the diacylglyceryl group from phosphatidylglycerol to the sulfhydryl group of the N-terminal cysteine of a prolipoprotein, the first step in the formation of mature lipoproteins. This is Phosphatidylglycerol--prolipoprotein diacylglyceryl transferase from Helicobacter pylori (strain G27).